The chain runs to 298 residues: Cyclin-C (298 aa).

Positions N46–H162 constitute a Cyclin N-terminal domain. Residues K278–M298 form a disordered region.

It belongs to the cyclin family. Cyclin C subfamily. Component of the Mediator complex.

It is found in the nucleus. Its function is as follows. Component of the Mediator complex, a coactivator involved in regulated gene transcription of nearly all RNA polymerase II-dependent genes. Mediator functions as a bridge to convey information from gene-specific regulatory proteins to the basal RNA polymerase II transcription machinery. Mediator is recruited to promoters by direct interactions with regulatory proteins and serves as a scaffold for the assembly of a functional preinitiation complex with RNA polymerase II and the general transcription factors. Binds to and activates cyclin-dependent kinase cdk-8 that phosphorylates the CTD (C-terminal domain) of the large subunit of RNA polymerase II (RNAp II), which may inhibit the formation of a transcription initiation complex. The sequence is that of Cyclin-C (cic-1) from Caenorhabditis briggsae.